We begin with the raw amino-acid sequence, 510 residues long: NAD(P)H-quinone oxidoreductase subunit 2, chloroplastic (510 aa).

The next 12 helical transmembrane spans lie at 24-44 (LLLF…GLIL), 59-79 (WFYF…LFRW), 99-119 (IFQF…VEYI), 124-144 (MAIT…MFLC), 149-169 (LITI…LSGY), 183-203 (YLLM…WLYG), 229-249 (ISIA…PAPF), 295-315 (WHLL…LIAI), 323-343 (MLAY…IVGD), 354-374 (YMLF…LFGL), 395-415 (ALSS…AGFF), and 418-438 (LHLF…IGLL).

Belongs to the complex I subunit 2 family. NDH is composed of at least 16 different subunits, 5 of which are encoded in the nucleus.

The protein resides in the plastid. Its subcellular location is the chloroplast thylakoid membrane. The enzyme catalyses a plastoquinone + NADH + (n+1) H(+)(in) = a plastoquinol + NAD(+) + n H(+)(out). The catalysed reaction is a plastoquinone + NADPH + (n+1) H(+)(in) = a plastoquinol + NADP(+) + n H(+)(out). Its function is as follows. NDH shuttles electrons from NAD(P)H:plastoquinone, via FMN and iron-sulfur (Fe-S) centers, to quinones in the photosynthetic chain and possibly in a chloroplast respiratory chain. The immediate electron acceptor for the enzyme in this species is believed to be plastoquinone. Couples the redox reaction to proton translocation, and thus conserves the redox energy in a proton gradient. The chain is NAD(P)H-quinone oxidoreductase subunit 2, chloroplastic from Ensete ventricosum (Abyssinian banana).